We begin with the raw amino-acid sequence, 545 residues long: CTP synthase (545 aa).

An amidoligase domain region spans residues 1-266; sequence MTTNYIFVTG…DDYICKRFSL (266 aa). Ser14 contacts CTP. Ser14 is a UTP binding site. Residues 15–20 and Asp72 each bind ATP; that span reads SLGKGI. Mg(2+)-binding residues include Asp72 and Glu140. CTP is bound by residues 147 to 149, 187 to 192, and Lys223; these read DIE and KTKPTQ. Residues 187 to 192 and Lys223 each bind UTP; that span reads KTKPTQ. 239–241 provides a ligand contact to ATP; sequence KDV. Positions 291–542 constitute a Glutamine amidotransferase type-1 domain; sequence TIGMVGKYIE…VKAANEHQKR (252 aa). Residue Gly352 participates in L-glutamine binding. The active-site Nucleophile; for glutamine hydrolysis is the Cys379. L-glutamine is bound by residues 380–383, Glu403, and Arg470; that span reads LGMQ. Residues His515 and Glu517 contribute to the active site.

The protein belongs to the CTP synthase family. Homotetramer.

It carries out the reaction UTP + L-glutamine + ATP + H2O = CTP + L-glutamate + ADP + phosphate + 2 H(+). It catalyses the reaction L-glutamine + H2O = L-glutamate + NH4(+). The catalysed reaction is UTP + NH4(+) + ATP = CTP + ADP + phosphate + 2 H(+). It functions in the pathway pyrimidine metabolism; CTP biosynthesis via de novo pathway; CTP from UDP: step 2/2. With respect to regulation, allosterically activated by GTP, when glutamine is the substrate; GTP has no effect on the reaction when ammonia is the substrate. The allosteric effector GTP functions by stabilizing the protein conformation that binds the tetrahedral intermediate(s) formed during glutamine hydrolysis. Inhibited by the product CTP, via allosteric rather than competitive inhibition. In terms of biological role, catalyzes the ATP-dependent amination of UTP to CTP with either L-glutamine or ammonia as the source of nitrogen. Regulates intracellular CTP levels through interactions with the four ribonucleotide triphosphates. This Salmonella paratyphi A (strain ATCC 9150 / SARB42) protein is CTP synthase.